We begin with the raw amino-acid sequence, 259 residues long: Imidazole glycerol phosphate synthase subunit HisF (259 aa).

Active-site residues include aspartate 11 and aspartate 130.

The protein belongs to the HisA/HisF family. Heterodimer of HisH and HisF.

The protein localises to the cytoplasm. The enzyme catalyses 5-[(5-phospho-1-deoxy-D-ribulos-1-ylimino)methylamino]-1-(5-phospho-beta-D-ribosyl)imidazole-4-carboxamide + L-glutamine = D-erythro-1-(imidazol-4-yl)glycerol 3-phosphate + 5-amino-1-(5-phospho-beta-D-ribosyl)imidazole-4-carboxamide + L-glutamate + H(+). Its pathway is amino-acid biosynthesis; L-histidine biosynthesis; L-histidine from 5-phospho-alpha-D-ribose 1-diphosphate: step 5/9. In terms of biological role, IGPS catalyzes the conversion of PRFAR and glutamine to IGP, AICAR and glutamate. The HisF subunit catalyzes the cyclization activity that produces IGP and AICAR from PRFAR using the ammonia provided by the HisH subunit. The polypeptide is Imidazole glycerol phosphate synthase subunit HisF (Desulfovibrio desulfuricans (strain ATCC 27774 / DSM 6949 / MB)).